The primary structure comprises 190 residues: Molybdenum cofactor guanylyltransferase (190 aa).

GTP is bound by residues 8–10 (LAG), Lys-20, Asp-64, and Asp-98. Asp-98 is a binding site for Mg(2+).

The protein belongs to the MobA family. As to quaternary structure, monomer. Mg(2+) serves as cofactor.

It is found in the cytoplasm. It catalyses the reaction Mo-molybdopterin + GTP + H(+) = Mo-molybdopterin guanine dinucleotide + diphosphate. Transfers a GMP moiety from GTP to Mo-molybdopterin (Mo-MPT) cofactor (Moco or molybdenum cofactor) to form Mo-molybdopterin guanine dinucleotide (Mo-MGD) cofactor. In Rhodobacter capsulatus (Rhodopseudomonas capsulata), this protein is Molybdenum cofactor guanylyltransferase.